The sequence spans 345 residues: Nicotinate-nucleotide--dimethylbenzimidazole phosphoribosyltransferase (345 aa).

The active-site Proton acceptor is the Glu-312.

This sequence belongs to the CobT family.

It catalyses the reaction 5,6-dimethylbenzimidazole + nicotinate beta-D-ribonucleotide = alpha-ribazole 5'-phosphate + nicotinate + H(+). The protein operates within nucleoside biosynthesis; alpha-ribazole biosynthesis; alpha-ribazole from 5,6-dimethylbenzimidazole: step 1/2. Catalyzes the synthesis of alpha-ribazole-5'-phosphate from nicotinate mononucleotide (NAMN) and 5,6-dimethylbenzimidazole (DMB). In Bacteroides fragilis (strain YCH46), this protein is Nicotinate-nucleotide--dimethylbenzimidazole phosphoribosyltransferase.